The following is an 842-amino-acid chain: Protein translocase subunit SecA (842 aa).

Residues Q85, 103 to 107, and D493 contribute to the ATP site; that span reads GEGKT. Zn(2+)-binding residues include C825, C827, C836, and H837.

Belongs to the SecA family. Monomer and homodimer. Part of the essential Sec protein translocation apparatus which comprises SecA, SecYEG and auxiliary proteins SecDF. Other proteins may also be involved. Requires Zn(2+) as cofactor.

It localises to the cell membrane. Its subcellular location is the cytoplasm. The catalysed reaction is ATP + H2O + cellular proteinSide 1 = ADP + phosphate + cellular proteinSide 2.. In terms of biological role, part of the Sec protein translocase complex. Interacts with the SecYEG preprotein conducting channel. Has a central role in coupling the hydrolysis of ATP to the transfer of proteins into and across the cell membrane, serving as an ATP-driven molecular motor driving the stepwise translocation of polypeptide chains across the membrane. This is Protein translocase subunit SecA from Streptococcus uberis (strain ATCC BAA-854 / 0140J).